Reading from the N-terminus, the 74-residue chain is Coleoptericin (74 aa).

A disordered region spans residues 1-74 (SLQGGAPNFP…TWHVGGTYRR (74 aa)).

The protein belongs to the coleoptericin family.

Its subcellular location is the secreted. Its function is as follows. Responsible for the anti Gram-negative activity of immune hemolymph of Z.atratus. This chain is Coleoptericin, found in Zophobas atratus (Giant mealworm beetle).